The primary structure comprises 210 residues: 3-hexulose-6-phosphate synthase (210 aa).

This sequence belongs to the HPS/KGPDC family. HPS subfamily.

The catalysed reaction is D-ribulose 5-phosphate + formaldehyde = D-arabino-hex-3-ulose 6-phosphate. It functions in the pathway one-carbon metabolism; formaldehyde assimilation via RuMP pathway; D-fructose 6-phosphate from D-ribulose 5-phosphate and formaldehyde: step 1/2. In terms of biological role, catalyzes the condensation of ribulose 5-phosphate with formaldehyde to form 3-hexulose 6-phosphate. The sequence is that of 3-hexulose-6-phosphate synthase from Staphylococcus epidermidis (strain ATCC 12228 / FDA PCI 1200).